We begin with the raw amino-acid sequence, 122 residues long: Fluoride-specific ion channel FluC (122 aa).

4 helical membrane passes run 4–24 (LAVL…SIFI), 33–53 (LGTM…SIYL), 66–86 (LLIT…LEGI), and 95–115 (LKAF…VALG). 2 residues coordinate Na(+): Gly73 and Thr76.

Belongs to the fluoride channel Fluc/FEX (TC 1.A.43) family.

It localises to the cell inner membrane. The catalysed reaction is fluoride(in) = fluoride(out). Na(+) is not transported, but it plays an essential structural role and its presence is essential for fluoride channel function. Functionally, fluoride-specific ion channel. Important for reducing fluoride concentration in the cell, thus reducing its toxicity. The protein is Fluoride-specific ion channel FluC of Hydrogenobaculum sp. (strain Y04AAS1).